A 358-amino-acid chain; its full sequence is MKFILMNQAAELPIEFLPRDGAYRKGRLLDSKNAEVENTTESDILQDARRAAEAHRRVRYKVQSIIKPGMTLLEIVKSIEDSTRILLSGERNNGIGFPAGMSMNSCAAHYSVNPGEKDIILTENDVLKIDFGTHSNGRIMDSAFTIAFKEEFEPLLMAAKEGTETGIRSLGIDARVCDIGRDINEVISSYEMEVDGKKWAIRPVSDLHGHSISQFKIHGGISIPAVNNRDPTRITGDTFYAVETFATTGEGFINDRSPCSHFMINTHKSRKLYNKDLIKVYEFVRDSFGTLPFSPRHLDYYNLVEGSALKSVNLLTMMGLFTPYPPLNDIDGSKVAQFEHTVYLSESGKEILTRGDDY.

H109 provides a ligand contact to substrate. Residues D130, D141, and H210 each coordinate a divalent metal cation. H218 is a binding site for substrate. The a divalent metal cation site is built by E243 and E339.

This sequence belongs to the peptidase M24A family. Methionine aminopeptidase eukaryotic type 2 subfamily. Requires Co(2+) as cofactor. The cofactor is Zn(2+). Mn(2+) serves as cofactor. It depends on Fe(2+) as a cofactor.

Its subcellular location is the cytoplasm. It carries out the reaction Release of N-terminal amino acids, preferentially methionine, from peptides and arylamides.. Its activity is regulated as follows. Irreversibly inhibited by the fungal metabolite fumagillin and the fumagillin analog TNP470, antiangiogenic drugs. Functionally, cotranslationally removes the N-terminal methionine from nascent proteins. The N-terminal methionine is often cleaved when the second residue in the primary sequence is small and uncharged (Met-Ala-, Cys, Gly, Pro, Ser, Thr, or Val). The chain is Methionine aminopeptidase 2 from Encephalitozoon hellem (strain ATCC 50504) (Microsporidian parasite).